A 207-amino-acid polypeptide reads, in one-letter code: Thiamine-phosphate synthase (207 aa).

4-amino-2-methyl-5-(diphosphooxymethyl)pyrimidine is bound by residues 38 to 42 (QYRAK) and Asn70. Residues Asp71 and Asp90 each contribute to the Mg(2+) site. Thr109 is a binding site for 4-amino-2-methyl-5-(diphosphooxymethyl)pyrimidine. Residue 135 to 137 (TNS) participates in 2-[(2R,5Z)-2-carboxy-4-methylthiazol-5(2H)-ylidene]ethyl phosphate binding. A 4-amino-2-methyl-5-(diphosphooxymethyl)pyrimidine-binding site is contributed by Lys138. 2-[(2R,5Z)-2-carboxy-4-methylthiazol-5(2H)-ylidene]ethyl phosphate-binding positions include Gly165 and 185–186 (IS).

The protein belongs to the thiamine-phosphate synthase family. Requires Mg(2+) as cofactor.

It carries out the reaction 2-[(2R,5Z)-2-carboxy-4-methylthiazol-5(2H)-ylidene]ethyl phosphate + 4-amino-2-methyl-5-(diphosphooxymethyl)pyrimidine + 2 H(+) = thiamine phosphate + CO2 + diphosphate. The enzyme catalyses 2-(2-carboxy-4-methylthiazol-5-yl)ethyl phosphate + 4-amino-2-methyl-5-(diphosphooxymethyl)pyrimidine + 2 H(+) = thiamine phosphate + CO2 + diphosphate. It catalyses the reaction 4-methyl-5-(2-phosphooxyethyl)-thiazole + 4-amino-2-methyl-5-(diphosphooxymethyl)pyrimidine + H(+) = thiamine phosphate + diphosphate. The protein operates within cofactor biosynthesis; thiamine diphosphate biosynthesis; thiamine phosphate from 4-amino-2-methyl-5-diphosphomethylpyrimidine and 4-methyl-5-(2-phosphoethyl)-thiazole: step 1/1. Functionally, condenses 4-methyl-5-(beta-hydroxyethyl)thiazole monophosphate (THZ-P) and 2-methyl-4-amino-5-hydroxymethyl pyrimidine pyrophosphate (HMP-PP) to form thiamine monophosphate (TMP). In Clostridium perfringens (strain 13 / Type A), this protein is Thiamine-phosphate synthase.